Here is a 266-residue protein sequence, read N- to C-terminus: MKIGKFVIEGNAAIMGILNVTPDSFSDGGSYTTVQKALDHVEQMIADGAKIIDVGGESTRPGCQFVSATDEIDRVVPVIKAIKENYDILISIDTYKTETARAALEAGADILNDVWAGLYDGQMFALAAEYDAPIILMHNQDEEVYQEVTQDVCDFLGNRAQAALDAGVPKNNIWIDPGFGFAKSVQQNTELLKRLDRVCQLGYPVLFGISRKRVVDALLGGNTKAKERDGATAALSAYALGKGCQIVRVHDVKANQDIVAVLSQLM.

One can recognise a Pterin-binding domain in the interval 12 to 260 (AAIMGILNVT…DVKANQDIVA (249 aa)). Asn19 serves as a coordination point for Mg(2+). (7,8-dihydropterin-6-yl)methyl diphosphate is bound by residues Thr59, Asp93, Asn112, Asp176, Lys212, and 248–250 (RVH).

This sequence belongs to the DHPS family. As to quaternary structure, homodimer or homotrimer. Mg(2+) is required as a cofactor.

It catalyses the reaction (7,8-dihydropterin-6-yl)methyl diphosphate + 4-aminobenzoate = 7,8-dihydropteroate + diphosphate. It participates in cofactor biosynthesis; tetrahydrofolate biosynthesis; 7,8-dihydrofolate from 2-amino-4-hydroxy-6-hydroxymethyl-7,8-dihydropteridine diphosphate and 4-aminobenzoate: step 1/2. In terms of biological role, catalyzes the condensation of para-aminobenzoate (pABA) with 6-hydroxymethyl-7,8-dihydropterin diphosphate (DHPt-PP) to form 7,8-dihydropteroate (H2Pte), the immediate precursor of folate derivatives. The protein is Dihydropteroate synthase (folP) of Streptococcus pyogenes serotype M3 (strain ATCC BAA-595 / MGAS315).